Consider the following 484-residue polypeptide: Acetyl-coenzyme A carboxylase carboxyl transferase subunit beta, chloroplastic (484 aa).

The CoA carboxyltransferase N-terminal domain maps to 223–484 (LWIQCDNCYG…LHAFFPLNKN (262 aa)). Residues Cys227, Cys230, Cys243, and Cys246 each contribute to the Zn(2+) site. The C4-type zinc finger occupies 227–246 (CDNCYGLMYKKVKINVCEQC).

Belongs to the AccD/PCCB family. As to quaternary structure, acetyl-CoA carboxylase is a heterohexamer composed of biotin carboxyl carrier protein, biotin carboxylase and 2 subunits each of ACCase subunit alpha and ACCase plastid-coded subunit beta (accD). Zn(2+) is required as a cofactor.

The protein localises to the plastid. It is found in the chloroplast stroma. The catalysed reaction is N(6)-carboxybiotinyl-L-lysyl-[protein] + acetyl-CoA = N(6)-biotinyl-L-lysyl-[protein] + malonyl-CoA. Its pathway is lipid metabolism; malonyl-CoA biosynthesis; malonyl-CoA from acetyl-CoA: step 1/1. Functionally, component of the acetyl coenzyme A carboxylase (ACC) complex. Biotin carboxylase (BC) catalyzes the carboxylation of biotin on its carrier protein (BCCP) and then the CO(2) group is transferred by the transcarboxylase to acetyl-CoA to form malonyl-CoA. The protein is Acetyl-coenzyme A carboxylase carboxyl transferase subunit beta, chloroplastic of Capsella bursa-pastoris (Shepherd's purse).